The primary structure comprises 132 residues: UPF0299 membrane protein CKO_00648 (132 aa).

4 helical membrane passes run 7-27, 31-51, 63-83, and 93-113; these read IIWQ…AGIF, LLPI…VLLA, GCYV…VGVM, and FGPV…VVSW.

It belongs to the UPF0299 family.

It is found in the cell inner membrane. This is UPF0299 membrane protein CKO_00648 from Citrobacter koseri (strain ATCC BAA-895 / CDC 4225-83 / SGSC4696).